Here is a 518-residue protein sequence, read N- to C-terminus: Delta(14)-sterol reductase erg24B (518 aa).

Asn36 carries N-linked (GlcNAc...) asparagine glycosylation. Transmembrane regions (helical) follow at residues 110-130, 150-170, 182-202, 294-314, 321-341, and 355-375; these read VTMW…FLPG, AFLS…LYGT, YVQV…FVYL, IVLT…MEPA, VIMD…VPFL, and ELGL…YVIF. NADP(+) contacts are provided by residues Lys382, Arg386, Leu409, Trp414, and 421-422; that span reads NY. A helical transmembrane segment spans residues 464–484; that stretch reads SRGWGMIFTYFYMIYFGVLLL. Residues Asp490, 494 to 498, and Tyr505 each bind NADP(+); that span reads CKRKY.

It belongs to the ERG4/ERG24 family.

It localises to the endoplasmic reticulum membrane. Its pathway is steroid metabolism; ergosterol biosynthesis. Its function is as follows. Delta(14)-sterol reductase; part of the third module of ergosterol biosynthesis pathway that includes the late steps of the pathway. Catalyzes the reduction of the C14=C15 double bond within 4,4,24-trimethyl ergosta-8,14,24(28)-trienolto produce 4,4-dimethylfecosterol. The third module or late pathway involves the ergosterol synthesis itself through consecutive reactions that mainly occur in the endoplasmic reticulum (ER) membrane. Firstly, the squalene synthase erg9 catalyzes the condensation of 2 farnesyl pyrophosphate moieties to form squalene, which is the precursor of all steroids. Squalene synthase is crucial for balancing the incorporation of farnesyl diphosphate (FPP) into sterol and nonsterol isoprene synthesis. Secondly, squalene is converted into lanosterol by the consecutive action of the squalene epoxidase erg1 and the lanosterol synthase erg7. Then, the delta(24)-sterol C-methyltransferase erg6 methylates lanosterol at C-24 to produce eburicol. Eburicol is the substrate of the sterol 14-alpha demethylase encoded by cyp51A and cyp51B, to yield 4,4,24-trimethyl ergosta-8,14,24(28)-trienol. The C-14 reductase erg24 then reduces the C14=C15 double bond which leads to 4,4-dimethylfecosterol. A sequence of further demethylations at C-4, involving the C-4 demethylation complex containing the C-4 methylsterol oxidases erg25A or erg25B, the sterol-4-alpha-carboxylate 3-dehydrogenase erg26 and the 3-keto-steroid reductase erg27, leads to the production of fecosterol via 4-methylfecosterol. The C-8 sterol isomerase erg2 then catalyzes the reaction which results in unsaturation at C-7 in the B ring of sterols and thus converts fecosterol to episterol. The sterol-C5-desaturase erg3B then catalyzes the introduction of a C-5 double bond in the B ring to produce 5-dehydroepisterol. The 2 other sterol-C5-desaturases, erg3A and erg3C, seem to be less important in ergosterol biosynthesis. The C-22 sterol desaturase erg5 further converts 5-dehydroepisterol into ergosta-5,7,22,24(28)-tetraen-3beta-ol by forming the C-22(23) double bond in the sterol side chain. Finally, ergosta-5,7,22,24(28)-tetraen-3beta-ol is substrate of the C-24(28) sterol reductases erg4A and erg4B to produce ergosterol. Possible alternative sterol biosynthetic pathways might exist from fecosterol to ergosterol, depending on the activities of the erg3 isoforms. The protein is Delta(14)-sterol reductase erg24B of Aspergillus fumigatus (strain ATCC MYA-4609 / CBS 101355 / FGSC A1100 / Af293) (Neosartorya fumigata).